The sequence spans 260 residues: uncharacterized protein (260 aa).

One can recognise a Radical SAM core domain in the interval 6 to 239; sequence AGVRSGVVVS…VAVAETYLPN (234 aa).

This is an uncharacterized protein from Sinorhizobium fredii (strain NBRC 101917 / NGR234).